We begin with the raw amino-acid sequence, 77 residues long: U14-theraphotoxin-Cg1a 3 (77 aa).

Residues 1–21 (MKTSVLLVILGIAAITVQCTA) form the signal peptide. Positions 22 to 49 (SESVEQDSLRTFVDTVLGWNAEMASEAR) are excised as a propeptide. Cystine bridges form between Cys50–Cys64, Cys57–Cys69, and Cys63–Cys75. Lysine amide is present on Lys77.

The protein belongs to the neurotoxin 10 (Hwtx-1) family. 65 (Jztx-21) subfamily. As to expression, expressed by the venom gland.

It is found in the secreted. Functionally, probable ion channel inhibitor. The protein is U14-theraphotoxin-Cg1a 3 of Chilobrachys guangxiensis (Chinese earth tiger tarantula).